The sequence spans 634 residues: MDLLKIKDPSFMKQLDIKELEALAADIRAFLITSTSKSGGHIGPNLGVVELTIALHYTFNSPKDKFIWDVGHQSYVHKILTGRANQFDTLRKHGGLDGFPKRKESIHDVFETGHSSTSLSAACGMVIARDIKKEDFYVIPIIGDGALTGGMAFEALNHIGDMGKDMIVILNDNDMSIAPNVGALHNVLGKLRTSDKFQQTKTNIDKLIRKIPTAGEKLADTAEKTKDSLKHLLVNGTFFEELGFMYLGPIDGHNLEDILTNLEIAKRARGPVILHVVTKKGKGYQPAELDSRGTWHGTGPYKVETGSFIKSVKTAPSWSSVISNELMRLATADERIVAITPAMPVGSKLEKFAKAFPERFFDVGIAEQHATTMAAGLATQGMKPFLAIYSTFLQRAYDQLVHDVCRQKLNVVIGIDRAGLVGADGETHQGIFDISFLNSIPNMIITMPKDEVEARQLMVTAFDYDAGPFAIRYPRGNGLGVELTESNTLIPIGEWETIIQPIDAVIVTFGPTIQLALKAADQLETEGYRVGVINARFIKPLDETLLHQMIKQKIPILTVEESLLKGGFGASVLEFIETNNYTDVAIHRIGLPDEFISHGSVPVILESYGISEAGIELKIKEMLAQSEKLRAKRL.

Residues His-72 and 113–115 each bind thiamine diphosphate; that span reads GHS. Asp-144 is a Mg(2+) binding site. Thiamine diphosphate-binding positions include 145-146, Asn-173, Tyr-284, and Glu-367; that span reads GA. Asn-173 is a binding site for Mg(2+).

It belongs to the transketolase family. DXPS subfamily. As to quaternary structure, homodimer. It depends on Mg(2+) as a cofactor. Thiamine diphosphate serves as cofactor.

The catalysed reaction is D-glyceraldehyde 3-phosphate + pyruvate + H(+) = 1-deoxy-D-xylulose 5-phosphate + CO2. The protein operates within metabolic intermediate biosynthesis; 1-deoxy-D-xylulose 5-phosphate biosynthesis; 1-deoxy-D-xylulose 5-phosphate from D-glyceraldehyde 3-phosphate and pyruvate: step 1/1. Catalyzes the acyloin condensation reaction between C atoms 2 and 3 of pyruvate and glyceraldehyde 3-phosphate to yield 1-deoxy-D-xylulose-5-phosphate (DXP). This is 1-deoxy-D-xylulose-5-phosphate synthase from Listeria welshimeri serovar 6b (strain ATCC 35897 / DSM 20650 / CCUG 15529 / CIP 8149 / NCTC 11857 / SLCC 5334 / V8).